We begin with the raw amino-acid sequence, 808 residues long: MTISPSKPKSSDVKQDKSAPLSTEELYQINAYWRACNYLALGMIYLQDNPLLKQPLKPGHIKNRLLGHWGSSPGLSFIYVHLNRLIKKYDLDVIYIAGPGHGAPGILGPTYLEGTYSEVYPDKSEDEEGMLKFFKQFSFPGGIGSHCTPETPGSIHEGGELGYSLSHAYGAAFDNPDLIVTAVIGDGEAETGPLATAWHSNKFINPIRDGAVLPILHLNGYKIANPTILARISHEELEDLFKGYGYTPYFVEGHDPAQVHQLMAATLETVILEIKKIQTEARTSGVAKRPRWPMIVLRTPKGWTAPAEIDGHKLEGFWRSHQVPITDVATNPDHLKILEQWMKSYKPEELFDEHGSLIPELKELAPIGHRRISANPVANGGILRKELRLSDFRNNAVEVSKPGAVEVENTKPLGNFLRDIMRNNMTNFRIFGPDETASNRLSAVYEVSEKTWLADILPEDADGSELSTDGRVMEMLSEHNLFGWLEGYLLSGRHGLFHSYEAFAHIVDSMFNQHAKWLEISKNEVAWRSPISSENILLSSTVWRQDNNGFSHQDPGFIDLVTNKSANVTRIYLPPDANCLLSVADHCLRSTNYVNVIVADKQKHLQFLSIEEAIAHCTKGIGIWDWASNDHHGQEPDLPDVIMASCGDVVTMEALAATAILRDEFPDLKVRFINVVDLYKLQPDTEHPHGLSDWDFDSLFTTDKPVIFNFHGYPWLIHKLAYRRTNHENIHVRGYKEKGSINTPLELAINNQVDRFNLVIDVIDRVPKLGSAAVYVRERMKKEIINNRNYAHKHGIDQPEILNWKWPY.

Belongs to the XFP family. The cofactor is thiamine diphosphate.

The polypeptide is Probable phosphoketolase 1 (Nostoc sp. (strain PCC 7120 / SAG 25.82 / UTEX 2576)).